The chain runs to 324 residues: o-succinylbenzoate synthase (324 aa).

Lysine 135 acts as the Proton donor in catalysis. Residues aspartate 163, glutamate 192, and aspartate 215 each coordinate Mg(2+). The active-site Proton acceptor is lysine 237.

This sequence belongs to the mandelate racemase/muconate lactonizing enzyme family. MenC type 1 subfamily. A divalent metal cation is required as a cofactor.

The catalysed reaction is (1R,6R)-6-hydroxy-2-succinyl-cyclohexa-2,4-diene-1-carboxylate = 2-succinylbenzoate + H2O. Its pathway is quinol/quinone metabolism; 1,4-dihydroxy-2-naphthoate biosynthesis; 1,4-dihydroxy-2-naphthoate from chorismate: step 4/7. It functions in the pathway quinol/quinone metabolism; menaquinone biosynthesis. In terms of biological role, converts 2-succinyl-6-hydroxy-2,4-cyclohexadiene-1-carboxylate (SHCHC) to 2-succinylbenzoate (OSB). This is o-succinylbenzoate synthase from Aliivibrio fischeri (strain MJ11) (Vibrio fischeri).